Here is a 427-residue protein sequence, read N- to C-terminus: Male abnormal protein mab-31 (427 aa).

The disordered stretch occupies residues 68–102 (PIGTGRFPNPSPPRSSSGTNTPIRKTPGSRPDRGK).

Its subcellular location is the nucleus. Its function is as follows. Putative transcription factor. Acts in a TGF-beta-like pathway during development of male-specific genital sensilla (simple sense organs), known as rays. Involved in production of reactive oxygen species (ROS), acting downstream of the TGF-beta-like dbl-1 signaling pathway. Involved in locomotory behavior. The polypeptide is Male abnormal protein mab-31 (Caenorhabditis elegans).